A 62-amino-acid chain; its full sequence is Beta-defensin 33 (62 aa).

The first 20 residues, 1 to 20, serve as a signal peptide directing secretion; that stretch reads MRLLFLLFILLVCLAQTTSG. Disulfide bonds link Cys-30/Cys-59, Cys-37/Cys-52, and Cys-45/Cys-60.

The protein belongs to the beta-defensin family.

The protein localises to the secreted. Functionally, has antibacterial activity. This is Beta-defensin 33 (Defb33) from Mus musculus (Mouse).